The following is a 128-amino-acid chain: Small ribosomal subunit protein bS6 (128 aa).

Belongs to the bacterial ribosomal protein bS6 family.

Functionally, binds together with bS18 to 16S ribosomal RNA. The chain is Small ribosomal subunit protein bS6 from Thermotoga sp. (strain RQ2).